A 297-amino-acid polypeptide reads, in one-letter code: tRNA-cytidine(32) 2-sulfurtransferase (297 aa).

The short motif at 45-50 (SGGKDS) is the PP-loop motif element. [4Fe-4S] cluster contacts are provided by Cys-120, Cys-123, and Cys-211.

It belongs to the TtcA family. In terms of assembly, homodimer. It depends on Mg(2+) as a cofactor. [4Fe-4S] cluster is required as a cofactor.

The protein resides in the cytoplasm. The enzyme catalyses cytidine(32) in tRNA + S-sulfanyl-L-cysteinyl-[cysteine desulfurase] + AH2 + ATP = 2-thiocytidine(32) in tRNA + L-cysteinyl-[cysteine desulfurase] + A + AMP + diphosphate + H(+). The protein operates within tRNA modification. In terms of biological role, catalyzes the ATP-dependent 2-thiolation of cytidine in position 32 of tRNA, to form 2-thiocytidine (s(2)C32). The sulfur atoms are provided by the cysteine/cysteine desulfurase (IscS) system. This is tRNA-cytidine(32) 2-sulfurtransferase from Vibrio parahaemolyticus serotype O3:K6 (strain RIMD 2210633).